The following is a 336-amino-acid chain: Ketol-acid reductoisomerase (NADP(+)) (336 aa).

One can recognise a KARI N-terminal Rossmann domain in the interval 1-182 (MAVIYYDKDA…GVTRAGVIET (182 aa)). NADP(+)-binding positions include 25-28 (YGSQ), Arg48, Ser51, Ser53, and 83-86 (DENQ). The active site involves His108. Residue Gly134 coordinates NADP(+). The 146-residue stretch at 183-328 (TFKEETETDL…KELRKMMPWL (146 aa)) folds into the KARI C-terminal knotted domain. Mg(2+) is bound by residues Asp191, Glu195, Glu227, and Glu231. A substrate-binding site is contributed by Ser252.

It belongs to the ketol-acid reductoisomerase family. It depends on Mg(2+) as a cofactor.

The enzyme catalyses (2R)-2,3-dihydroxy-3-methylbutanoate + NADP(+) = (2S)-2-acetolactate + NADPH + H(+). The catalysed reaction is (2R,3R)-2,3-dihydroxy-3-methylpentanoate + NADP(+) = (S)-2-ethyl-2-hydroxy-3-oxobutanoate + NADPH + H(+). It functions in the pathway amino-acid biosynthesis; L-isoleucine biosynthesis; L-isoleucine from 2-oxobutanoate: step 2/4. The protein operates within amino-acid biosynthesis; L-valine biosynthesis; L-valine from pyruvate: step 2/4. Functionally, involved in the biosynthesis of branched-chain amino acids (BCAA). Catalyzes an alkyl-migration followed by a ketol-acid reduction of (S)-2-acetolactate (S2AL) to yield (R)-2,3-dihydroxy-isovalerate. In the isomerase reaction, S2AL is rearranged via a Mg-dependent methyl migration to produce 3-hydroxy-3-methyl-2-ketobutyrate (HMKB). In the reductase reaction, this 2-ketoacid undergoes a metal-dependent reduction by NADPH to yield (R)-2,3-dihydroxy-isovalerate. In Thermotoga petrophila (strain ATCC BAA-488 / DSM 13995 / JCM 10881 / RKU-1), this protein is Ketol-acid reductoisomerase (NADP(+)).